The chain runs to 872 residues: Telomerase component p95 (872 aa).

Disordered stretches follow at residues 55–75 (NQDQ…NSNK) and 471–492 (KNNK…ESTS). Residues 474–486 (KNQEETPETKDET) are compositionally biased toward basic and acidic residues.

In terms of assembly, telomerase consist of two subunit, p80 and p95 that form a 1:1:1 complex with the 159 nt telomerase RNA.

It localises to the nucleus. Its subcellular location is the chromosome. The protein resides in the telomere. The catalysed reaction is DNA(n) + a 2'-deoxyribonucleoside 5'-triphosphate = DNA(n+1) + diphosphate. Ribonucleoprotein DNA polymerase that catalyzes the de novo synthesis of telomeric simple sequence repeats. Subunit p95 contains some or all of the template-independent primer DNA-binding site termed the anchor site. In Tetrahymena thermophila, this protein is Telomerase component p95.